Here is a 583-residue protein sequence, read N- to C-terminus: 2-succinyl-5-enolpyruvyl-6-hydroxy-3-cyclohexene-1-carboxylate synthase (583 aa).

This sequence belongs to the TPP enzyme family. MenD subfamily. Homodimer. It depends on Mg(2+) as a cofactor. Requires Mn(2+) as cofactor. The cofactor is thiamine diphosphate.

It carries out the reaction isochorismate + 2-oxoglutarate + H(+) = 5-enolpyruvoyl-6-hydroxy-2-succinyl-cyclohex-3-ene-1-carboxylate + CO2. It participates in quinol/quinone metabolism; 1,4-dihydroxy-2-naphthoate biosynthesis; 1,4-dihydroxy-2-naphthoate from chorismate: step 2/7. Its pathway is quinol/quinone metabolism; menaquinone biosynthesis. Functionally, catalyzes the thiamine diphosphate-dependent decarboxylation of 2-oxoglutarate and the subsequent addition of the resulting succinic semialdehyde-thiamine pyrophosphate anion to isochorismate to yield 2-succinyl-5-enolpyruvyl-6-hydroxy-3-cyclohexene-1-carboxylate (SEPHCHC). This is 2-succinyl-5-enolpyruvyl-6-hydroxy-3-cyclohexene-1-carboxylate synthase from Chlorobium chlorochromatii (strain CaD3).